Here is a 335-residue protein sequence, read N- to C-terminus: MNKITNFLILSAVLFFSLIESANAARLKDIASIRGVRENQLIGYGIVVGLKGTGDGKNEFMSKSMVRMLDKLGMKLDNVDFASKNVAAVIVTATMPAFGKAGNPIDINVSAIGEASSLQGGTLLQTPLRAANEQVFAVAQGSIVIGGDGKDSHTTAGRIPNGATIERDMTADFSSRKMYRLTLINPDFTTAARSVLTINKELGGHYASAKDSGTIDIITPFAYENRGVELLATIESIEINPDMKARVVVNEKTGTIVIGDKVKISRVAISHGALSVKVGDGKKGAEEKVAVLDSGVSVGELVQALNKLGVSPKDLITILQSIKSAGALHGELEVL.

An N-terminal signal peptide occupies residues 1–24; that stretch reads MNKITNFLILSAVLFFSLIESANA.

It belongs to the FlgI family. In terms of assembly, the basal body constitutes a major portion of the flagellar organelle and consists of four rings (L,P,S, and M) mounted on a central rod.

The protein resides in the periplasm. The protein localises to the bacterial flagellum basal body. Its function is as follows. Assembles around the rod to form the L-ring and probably protects the motor/basal body from shearing forces during rotation. This Bdellovibrio bacteriovorus (strain ATCC 15356 / DSM 50701 / NCIMB 9529 / HD100) protein is Flagellar P-ring protein.